The chain runs to 161 residues: AP-1 complex subunit sigma-1 (161 aa).

The protein belongs to the adaptor complexes small subunit family. As to quaternary structure, adaptor protein complex 1 (AP-1) is a heterotetramer composed of two large adaptins (gamma-type subunit and beta-type subunit), a medium adaptin (mu-type subunit) and a small adaptin (sigma-type subunit). As to expression, expressed in seedlings, roots, stems, leaves, flowers and siliques (developing fruits and seeds).

It is found in the golgi apparatus. It localises to the cytoplasmic vesicle. Its subcellular location is the clathrin-coated vesicle membrane. In terms of biological role, subunit of clathrin-associated adaptor protein complex 1 that plays a role in protein sorting at the trans-Golgi network and early endosomes (TGN/EE). The AP complexes mediate the recruitment of clathrin to membranes and the recognition of sorting signals within the cytosolic tails of transmembrane cargo molecules. This chain is AP-1 complex subunit sigma-1 (AAP19-1), found in Arabidopsis thaliana (Mouse-ear cress).